An 88-amino-acid polypeptide reads, in one-letter code: Protein K3 (88 aa).

Residues 8 to 82 (LPNAGDVIKG…TKGYIDVNYK (75 aa)) enclose the S1 motif domain. 2 binding to host EIF2AK2/PKR regions span residues 43 to 53 (SVKMHMDRYVE) and 74 to 79 (KGYIDV).

The protein belongs to the orthopoxvirus OPG041 family. As to quaternary structure, interacts with host EIF2AK2/PKR kinase.

In terms of biological role, viral mimic of eIF-2-alpha that acts as a pseudosubstrate for EIF2AK2/PKR kinase. Inhibits therefore eIF-2-alpha phosphorylation by host EIF2AK2/PKR kinase and prevents protein synthesis shutoff. Determinant of host species specificity. In Homo sapiens (Human), this protein is Protein K3 (OPG041).